The following is a 36-amino-acid chain: Toxin Bcg III 29.21 (36 aa).

Residues C6 and C31 are joined by a disulfide bond.

The protein resides in the secreted. Its subcellular location is the nematocyst. This Bunodosoma cangicum (Sea anemone) protein is Toxin Bcg III 29.21.